Consider the following 183-residue polypeptide: Capsid protein (183 aa).

The disordered stretch occupies residues 136-183; sequence NAPILSTLPETTVVRRRGRSPRRRTPSPRRRRSQSPRRRRSQSRESQC. Positions 149–176 are enriched in basic residues; sequence VRRRGRSPRRRTPSPRRRRSQSPRRRRS. S155, S162, and S170 each carry phosphoserine; by host. The 1; half-length repeat unit spans residues 155–161; it reads SPRRRTP. The tract at residues 155–177 is 3 X 8 AA repeats of S-P-R-R-R-[PR]-S-Q; sequence SPRRRTPSPRRRRSQSPRRRRSQ. Residues 158 to 175 carry the Bipartite nuclear localization signal motif; the sequence is RRTPSPRRRRSQSPRRRR. 2 consecutive repeat copies span residues 162-169 and 170-177. The interval 177-183 is RNA binding; the sequence is QSRESQC.

This sequence belongs to the orthohepadnavirus core antigen family. In terms of assembly, homodimerizes, then multimerizes. Interacts with cytosol exposed regions of viral L glycoprotein present in the reticulum-to-Golgi compartment. Interacts with human FLNB. Phosphorylated form interacts with host importin alpha; this interaction depends on the exposure of the NLS, which itself depends upon genome maturation and/or phosphorylation of the capsid protein. Interacts with host NUP153. Post-translationally, phosphorylated by host SRPK1, SRPK2, and maybe protein kinase C or GAPDH. Phosphorylation is critical for pregenomic RNA packaging. Protein kinase C phosphorylation is stimulated by HBx protein and may play a role in transport of the viral genome to the nucleus at the late step during the viral replication cycle.

The protein localises to the virion. It localises to the host cytoplasm. Self assembles to form an icosahedral capsid. Most capsids appear to be large particles with an icosahedral symmetry of T=4 and consist of 240 copies of capsid protein, though a fraction forms smaller T=3 particles consisting of 180 capsid proteins. Entering capsids are transported along microtubules to the nucleus. Phosphorylation of the capsid is thought to induce exposure of nuclear localization signal in the C-terminal portion of the capsid protein that allows binding to the nuclear pore complex via the importin (karyopherin-) alpha and beta. Capsids are imported in intact form through the nuclear pore into the nuclear basket, where it probably binds NUP153. Only capsids that contain the mature viral genome can release the viral DNA and capsid protein into the nucleoplasm. Immature capsids get stuck in the basket. Capsids encapsulate the pre-genomic RNA and the P protein. Pre-genomic RNA is reverse-transcribed into DNA while the capsid is still in the cytoplasm. The capsid can then either be directed to the nucleus, providing more genomes for transcription, or bud through the endoplasmic reticulum to provide new virions. This chain is Capsid protein, found in Homo sapiens (Human).